The following is a 495-amino-acid chain: Membrane-bound glycerophospholipid O-acyltransferase 1 (495 aa).

6 helical membrane passes run 34–54, 70–90, 126–146, 180–200, 238–258, and 297–317; these read VNFV…RIYL, IFGI…LFVL, IYIF…MIVT, PSFL…AGPC, TGAV…FLTL, and YFAW…FSGV. Catalysis depends on residues asparagine 350 and histidine 381. Transmembrane regions (helical) follow at residues 371–391, 426–446, and 450–470; these read VLTF…YFTF, TWAV…MLAV, and ISLY…IILF. Phosphoserine is present on serine 488.

This sequence belongs to the membrane-bound acyltransferase family. Expressed in neutrophils.

Its subcellular location is the endoplasmic reticulum membrane. It carries out the reaction a 1-acyl-sn-glycero-3-phospho-L-serine + an acyl-CoA = a 1,2-diacyl-sn-glycero-3-phospho-L-serine + CoA. The catalysed reaction is a 1-acyl-sn-glycero-3-phosphocholine + an acyl-CoA = a 1,2-diacyl-sn-glycero-3-phosphocholine + CoA. The enzyme catalyses a 1-acyl-sn-glycero-3-phosphoethanolamine + an acyl-CoA = a 1,2-diacyl-sn-glycero-3-phosphoethanolamine + CoA. It catalyses the reaction 1-(9Z-octadecenoyl)-sn-glycero-3-phospho-L-serine + (9Z)-octadecenoyl-CoA = 1,2-di-(9Z)-octadecenoyl-sn-glycero-3-phospho-L-serine + CoA. It carries out the reaction 1-(9Z-octadecenoyl)-sn-glycero-3-phospho-L-serine + octadecanoyl-CoA = 1-(9Z-octadecenoyl)-2-octadecanoyl-sn-glycero-3-phospho-L-serine + CoA. The catalysed reaction is 1-(9Z-octadecenoyl)-sn-glycero-3-phospho-L-serine + (9Z)-hexadecenoyl-CoA = 1-(9Z-octadecenoyl)-2-(9Z-hexadecenoyl)-sn-glycero-3-phospho-L-serine + CoA. The enzyme catalyses 1-(9Z-octadecenoyl)-sn-glycero-3-phospho-L-serine + (9Z,12Z)-octadecadienoyl-CoA = 1-(9Z-octadecenoyl)-2-(9Z,12Z-octadienoyl)-sn-glycero-3-phospho-L-serine + CoA. It catalyses the reaction 1-hexadecanoyl-sn-glycero-3-phosphocholine + (9Z)-octadecenoyl-CoA = 1-hexadecanoyl-2-(9Z-octadecenoyl)-sn-glycero-3-phosphocholine + CoA. It carries out the reaction a 1-O-(1Z-alkenyl)-sn-glycero-3-phosphoethanolamine + (9Z)-octadecenoyl-CoA = 1-O-(1Z)-alkenyl-2-(9Z)-octadecenoyl-sn-glycero-3-phosphoethanolamine + CoA. The catalysed reaction is 1-octadecanoyl-sn-glycero-3-phosphoethanolamine + (9Z)-octadecenoyl-CoA = 1-octadecanoyl-2-(9Z-octadecenoyl)-sn-glycero-3-phosphoethanolamine + CoA. The enzyme catalyses 1-(9Z-octadecenoyl)-sn-glycero-3-phosphoethanolamine + (9Z)-octadecenoyl-CoA = 1,2-di-(9Z-octadecenoyl)-sn-glycero-3-phosphoethanolamine + CoA. It catalyses the reaction 1-hexadecanoyl-sn-glycero-3-phosphoethanolamine + (9Z)-octadecenoyl-CoA = 1-hexadecanoyl-2-(9Z-octadecenoyl)-sn-glycero-3-phosphoethanolamine + CoA. It carries out the reaction 1-(10Z-heptadecenoyl)-sn-glycero-3-phosphoethanolamine + hexadecanoyl-CoA = 1-(10Z-heptadecenoyl)-2-hexadecanoyl-sn-glycero-3-phosphoethanolamine + CoA. The catalysed reaction is 1-(10Z-heptadecenoyl)-sn-glycero-3-phosphoethanolamine + (9Z)-octadecenoyl-CoA = 1-(10Z-heptadecenoyl)-2-(9Z-octadecenoyl)-sn-glycero-3-phosphoethanolamine + CoA. It functions in the pathway lipid metabolism; phospholipid metabolism. Its activity is regulated as follows. Partially inhibited by thimerosal. Functionally, acyltransferase which catalyzes the transfer of an acyl group from an acyl-CoA towards a lysophospholipid producing a phospholipid and participates in the reacylation step of the phospholipid remodeling pathway also known as the Lands cycle. Acts on lysophosphatidylserine (1-acyl-2-hydroxy-sn-glycero-3-phospho-L-serine or LPS) and lysophosphatidylethanolamine (1-acyl-sn-glycero-3-phosphoethanolamine or LPE), and to a lesser extend lysophosphatidylcholine. Prefers oleoyl-CoA as the acyl donor and 1-oleoyl-LPE as acceptor. May play a role in neurite outgrowth during neuronal differentiation. The protein is Membrane-bound glycerophospholipid O-acyltransferase 1 of Homo sapiens (Human).